Consider the following 226-residue polypeptide: Thiamine-phosphate synthase (226 aa).

4-amino-2-methyl-5-(diphosphooxymethyl)pyrimidine is bound by residues 46-50 and N87; that span reads QLRDK. Positions 88 and 107 each coordinate Mg(2+). S126 contacts 4-amino-2-methyl-5-(diphosphooxymethyl)pyrimidine. 152-154 is a binding site for 2-[(2R,5Z)-2-carboxy-4-methylthiazol-5(2H)-ylidene]ethyl phosphate; sequence TPT. K155 contacts 4-amino-2-methyl-5-(diphosphooxymethyl)pyrimidine. G183 contacts 2-[(2R,5Z)-2-carboxy-4-methylthiazol-5(2H)-ylidene]ethyl phosphate.

The protein belongs to the thiamine-phosphate synthase family. Mg(2+) is required as a cofactor.

It carries out the reaction 2-[(2R,5Z)-2-carboxy-4-methylthiazol-5(2H)-ylidene]ethyl phosphate + 4-amino-2-methyl-5-(diphosphooxymethyl)pyrimidine + 2 H(+) = thiamine phosphate + CO2 + diphosphate. It catalyses the reaction 2-(2-carboxy-4-methylthiazol-5-yl)ethyl phosphate + 4-amino-2-methyl-5-(diphosphooxymethyl)pyrimidine + 2 H(+) = thiamine phosphate + CO2 + diphosphate. The catalysed reaction is 4-methyl-5-(2-phosphooxyethyl)-thiazole + 4-amino-2-methyl-5-(diphosphooxymethyl)pyrimidine + H(+) = thiamine phosphate + diphosphate. It functions in the pathway cofactor biosynthesis; thiamine diphosphate biosynthesis; thiamine phosphate from 4-amino-2-methyl-5-diphosphomethylpyrimidine and 4-methyl-5-(2-phosphoethyl)-thiazole: step 1/1. Functionally, condenses 4-methyl-5-(beta-hydroxyethyl)thiazole monophosphate (THZ-P) and 2-methyl-4-amino-5-hydroxymethyl pyrimidine pyrophosphate (HMP-PP) to form thiamine monophosphate (TMP). In Mycobacterium sp. (strain JLS), this protein is Thiamine-phosphate synthase.